The sequence spans 96 residues: MTMDTAQLKSQIQQYLVESGNYELISNELKARLLQEGWVDKVKDLTKSEMNINESTNFTQILSTVEPKALEMVSDSTRETVLKQIREFLEGIVDTQ.

A Glycyl lysine isopeptide (Lys-Gly) (interchain with G-Cter in ubiquitin) cross-link involves residue K68.

Belongs to the ENY2 family. Component of the nuclear pore complex (NPC)-associated TREX-2 complex (transcription and export complex 2), composed of at least SUS1, SAC3, THP1, SEM1, and CDC31. TREX-2 contains 2 SUS1 chains. The TREX-2 complex interacts with the nucleoporin NUP1. Component of the 1.8 MDa SAGA transcription coactivator-HAT complex. SAGA is built of 5 distinct domains with specialized functions. Within the SAGA complex, SUS1, SGF11, SGF73 and UBP8 form an additional subcomplex of SAGA called the DUB module (deubiquitination module). Interacts directly with THP1, SAC3, SGF11, and with the RNA polymerase II.

Its subcellular location is the nucleus. It localises to the nucleoplasm. It is found in the cytoplasm. The protein localises to the P-body. Its function is as follows. Involved in mRNA export coupled transcription activation by association with both the TREX-2 and the SAGA complexes. At the promoters, SAGA is required for recruitment of the basal transcription machinery. It influences RNA polymerase II transcriptional activity through different activities such as TBP interaction and promoter selectivity, interaction with transcription activators, and chromatin modification through histone acetylation and deubiquitination. Within the SAGA complex, participates in a subcomplex required for deubiquitination of H2B and for the maintenance of steady-state H3 methylation levels. The TREX-2 complex functions in docking export-competent ribonucleoprotein particles (mRNPs) to the nuclear entrance of the nuclear pore complex (nuclear basket). TREX-2 participates in mRNA export and accurate chromatin positioning in the nucleus by tethering genes to the nuclear periphery. May also be involved in cytoplasmic mRNA decay by interaction with components of P-bodies. The chain is Transcription and mRNA export factor SUS1 from Saccharomyces cerevisiae (strain RM11-1a) (Baker's yeast).